Reading from the N-terminus, the 89-residue chain is Small ribosomal subunit protein uS15 (89 aa).

Belongs to the universal ribosomal protein uS15 family. As to quaternary structure, part of the 30S ribosomal subunit. Forms a bridge to the 50S subunit in the 70S ribosome, contacting the 23S rRNA.

Its function is as follows. One of the primary rRNA binding proteins, it binds directly to 16S rRNA where it helps nucleate assembly of the platform of the 30S subunit by binding and bridging several RNA helices of the 16S rRNA. In terms of biological role, forms an intersubunit bridge (bridge B4) with the 23S rRNA of the 50S subunit in the ribosome. The protein is Small ribosomal subunit protein uS15 of Exiguobacterium sp. (strain ATCC BAA-1283 / AT1b).